A 21-amino-acid chain; its full sequence is Peptide PGLa-R6 (21 aa).

A Leucine amide modification is found at leucine 21.

As to expression, expressed by the skin glands.

It localises to the secreted. Its function is as follows. Antimicrobial peptide. This chain is Peptide PGLa-R6, found in Xenopus ruwenzoriensis (Uganda clawed frog).